A 78-amino-acid polypeptide reads, in one-letter code: Sec-independent protein translocase protein TatA (78 aa).

The chain crosses the membrane as a helical span at residues 1 to 21 (MGMPSMPELLIILLIVVLLFG). Positions 46–78 (DEEEVATENKKEIEEKTTASTTKTTADQDTTKA) are disordered. A compositionally biased stretch (basic and acidic residues) spans 52–62 (TENKKEIEEKT). Residues 63–78 (TASTTKTTADQDTTKA) are compositionally biased toward low complexity.

The protein belongs to the TatA/E family. The Tat system comprises two distinct complexes: a TatABC complex, containing multiple copies of TatA, TatB and TatC subunits, and a separate TatA complex, containing only TatA subunits. Substrates initially bind to the TatABC complex, which probably triggers association of the separate TatA complex to form the active translocon.

It localises to the cell inner membrane. In terms of biological role, part of the twin-arginine translocation (Tat) system that transports large folded proteins containing a characteristic twin-arginine motif in their signal peptide across membranes. TatA could form the protein-conducting channel of the Tat system. This Nitratiruptor sp. (strain SB155-2) protein is Sec-independent protein translocase protein TatA.